The sequence spans 556 residues: Glutamine--tRNA ligase (556 aa).

The 'HIGH' region signature appears at 34–44 (PEPNGYLHIGH). ATP is bound by residues 35–37 (EPN) and 41–47 (HIGHAKS). Residues Asp-67 and Tyr-212 each coordinate L-glutamine. Residues Thr-231, 261–262 (RL), and 269–271 (MSK) contribute to the ATP site. Positions 268-272 (VMSKR) match the 'KMSKS' region motif.

The protein belongs to the class-I aminoacyl-tRNA synthetase family. In terms of assembly, monomer.

Its subcellular location is the cytoplasm. The catalysed reaction is tRNA(Gln) + L-glutamine + ATP = L-glutaminyl-tRNA(Gln) + AMP + diphosphate. In Vibrio parahaemolyticus serotype O3:K6 (strain RIMD 2210633), this protein is Glutamine--tRNA ligase.